A 314-amino-acid chain; its full sequence is Formylglycine-generating enzyme (314 aa).

The segment covering 1 to 20 has biased composition (low complexity); the sequence is MAVAAPSPAAAAEPGPAARP. Positions 1–31 are disordered; it reads MAVAAPSPAAAAEPGPAARPRSTRGQVRLPG. Residues N194, I195, D208, and H210 each contribute to the Ca(2+) site. Residues C272 and C277 each contribute to the Cu(2+) site.

This sequence belongs to the sulfatase-modifying factor family. It depends on Cu(2+) as a cofactor.

It catalyses the reaction L-cysteinyl-[sulfatase] + 2 a thiol + O2 = an organic disulfide + 3-oxo-L-alanyl-[sulfatase] + hydrogen sulfide + H2O + H(+). It participates in protein modification; sulfatase oxidation. In terms of biological role, oxidase that catalyzes the conversion of cysteine to 3-oxoalanine on target proteins. 3-oxoalanine modification, which is also named formylglycine (fGly), occurs in the maturation of arylsulfatases and some alkaline phosphatases that use the hydrated form of 3-oxoalanine as a catalytic nucleophile. In Streptomyces coelicolor (strain ATCC BAA-471 / A3(2) / M145), this protein is Formylglycine-generating enzyme.